Here is a 134-residue protein sequence, read N- to C-terminus: MTGGKSGGKASGSKSSAQSRSSKAGLAFPVGRVHRLLRKGNYAQRVGAGAPVYLAAVLEYLAAEILELAGNAARDNKKTRIIPRHLQLAIRNDEELNKLLGHVTIAQGGVLPNIHQNLLPKKTAKPGKGPSQEL.

Residues 1–10 (MTGGKSGGKA) show a composition bias toward gly residues. The interval 1 to 26 (MTGGKSGGKASGSKSSAQSRSSKAGL) is disordered. Lysine 5 and lysine 9 each carry N6-acetyllysine. A compositionally biased stretch (low complexity) spans 11–25 (SGSKSSAQSRSSKAG). Glutamine 107 bears the N5-methylglutamine mark. At serine 131 the chain carries Phosphoserine. Positions 131–132 (SQ) match the [ST]-Q motif motif.

This sequence belongs to the histone H2A family. In terms of assembly, the nucleosome is a histone octamer containing two molecules each of H2A, H2B, H3 and H4 assembled in one H3-H4 heterotetramer and two H2A-H2B heterodimers. The octamer wraps approximately 147 bp of DNA. Phosphorylated to form H2AS128ph (gamma-H2A) in response to DNA double-strand breaks (DSBs) generated by exogenous genotoxic agents and by stalled replication forks. Phosphorylation is dependent on the DNA damage checkpoint kinases MEC1/ATR and TEL1/ATM, spreads on either side of a detected DSB site and may mark the surrounding chromatin for recruitment of proteins required for DNA damage signaling and repair. Gamma-H2A is removed from the DNA prior to the strand invasion-primer extension step of the repair process and subsequently dephosphorylated. Dephosphorylation is necessary for efficient recovery from the DNA damage checkpoint. In terms of processing, acetylated by ESA1 to form H2AK4ac and H2AK7ac.

It is found in the nucleus. It localises to the chromosome. Its function is as follows. Core component of nucleosome which plays a central role in DNA double strand break (DSB) repair. Nucleosomes wrap and compact DNA into chromatin, limiting DNA accessibility to the cellular machineries which require DNA as a template. Histones thereby play a central role in transcription regulation, DNA repair, DNA replication and chromosomal stability. DNA accessibility is regulated via a complex set of post-translational modifications of histones, also called histone code, and nucleosome remodeling. The protein is Histone H2A (HTA1) of Phaeosphaeria nodorum (strain SN15 / ATCC MYA-4574 / FGSC 10173) (Glume blotch fungus).